A 350-amino-acid polypeptide reads, in one-letter code: MDSFDYTTPDYGHYDDKDTLDLNTPVDKTSNTLRVPDILALVIFAVVFLVGVLGNALVVWVTAFEAKRTINAIWFLNLAVADFLSCLALPILFTSIVQHHHWPFGGAACSILPSLILLNMYASILLLATISADRFLLVFKPIWCQNFRGAGLAWIACAVAWGLALLLTIPSFLYRVVREEYFPPKVLCGVDYSHDKRRERAVAIVRLVLGFLWPLLTLMICYTFILLRTWSRRATRSTKTLKVVVAVVASFFIFWLPYQVTGIMMSFLEPSSPTFRLLKKLDSLCVSFAYINCCINPIIYVVAGQGFQGRLQKSLPSLLRNVLTEESVVRESKSFARSTVDTMADKTQAV.

Topologically, residues Met1–Asp37 are extracellular. A required for CHIPS binding region spans residues Asp10–Asp18. Tyr11 and Tyr14 each carry sulfotyrosine. Positions Asp21–Ser30 are involved in C5a binding. A helical transmembrane segment spans residues Ile38–Phe64. Residues Glu65–Thr69 are Cytoplasmic-facing. A helical membrane pass occupies residues Ile70 to Phe93. The Extracellular segment spans residues Thr94–Ser110. An intrachain disulfide couples Cys109 to Cys188. Residues Ile111–Ala132 traverse the membrane as a helical segment. Residues Asp133–Ala153 lie on the Cytoplasmic side of the membrane. The helical transmembrane segment at Trp154–Tyr174 threads the bilayer. Over Arg175–Arg200 the chain is Extracellular. Residues Ala201–Leu226 form a helical membrane-spanning segment. The Cytoplasmic segment spans residues Leu227 to Lys242. A helical transmembrane segment spans residues Val243–Met265. At Ser266–Asp282 the chain is on the extracellular side. The helical transmembrane segment at Ser283 to Ala303 threads the bilayer. At Gly304–Val350 the chain is on the cytoplasmic side. 6 positions are modified to phosphoserine: Ser314, Ser317, Ser327, Ser332, Ser334, and Ser338.

It belongs to the G-protein coupled receptor 1 family. Homodimer. May also form higher-order oligomers. Interacts (when phosphorylated) with ARRB1 and ARRB2; the interaction is associated with internalization of C5aR. Interacts (via N-terminal domain) with S.aureus chemotaxis inhibitory protein (CHIPS); the interaction blocks the receptor and may thus inhibit the immune response. Sulfation plays a critical role in the association of C5aR with C5a, but no significant role in the ability of the receptor to transduce a signal and mobilize calcium in response to a small peptide agonist. Sulfation at Tyr-14 is important for CHIPS binding. In terms of processing, phosphorylated on serine residues in response to C5a binding, resulting in internalization of the receptor and short-term desensitization to C5a.

It is found in the cell membrane. It localises to the cytoplasmic vesicle. In terms of biological role, receptor for the chemotactic and inflammatory peptide anaphylatoxin C5a. The ligand interacts with at least two sites on the receptor: a high-affinity site on the extracellular N-terminus, and a second site in the transmembrane region which activates downstream signaling events. Receptor activation stimulates chemotaxis, granule enzyme release, intracellular calcium release and superoxide anion production. This chain is C5a anaphylatoxin chemotactic receptor 1 (C5AR1), found in Pan troglodytes (Chimpanzee).